The chain runs to 174 residues: Small heat shock protein OV25-1 (174 aa).

The 112-residue stretch at 50–161 (LNECNIGNTL…ASRNIPIRAS (112 aa)) folds into the sHSP domain. Residues 153 to 174 (SRNIPIRASPKEPEAKQKTKKQ) form a disordered region. A compositionally biased stretch (basic and acidic residues) spans 161–174 (SPKEPEAKQKTKKQ).

Belongs to the small heat shock protein (HSP20) family.

This chain is Small heat shock protein OV25-1 (OV25-1), found in Onchocerca volvulus.